Reading from the N-terminus, the 376-residue chain is MASHAGQQHAPAFGQAARASGPTDGRAASRPSHRQGASEARGDPELPTLLRVYIDGPHGVGKTTTSAQLMEALGPRDNIVYVPEPMTYWQVLGASETLTNIYNTQHRLDRGEISAGEAAVVMTSAQITMSTPYAATDAVLAPHIGGEAVGPQAPPPALTLVFDRHPIASLLCYPAARYLMGSMTPQAVLAFVALMPPTAPGTNLVLGVLPEAEHADRLARRQRPGERLDLAMLSAIRRVYDLLANTVRYLQRGGRWREDWGRLTGVAAATPRPDPEDGAGSLPRIEDTLFALFRVPELLAPNGDLYHIFAWVLDVLADRLLPMHLFVLDYDQSPVGCRDALLRLTAGMIPTRVTTAGSIAEIRDLARTFAREVGGV.

The disordered stretch occupies residues 1-47 (MASHAGQQHAPAFGQAARASGPTDGRAASRPSHRQGASEARGDPELP). 56 to 63 (GPHGVGKT) lines the ATP pocket. Glutamate 84 acts as the Proton acceptor in catalysis. Residues tyrosine 102 and glutamine 126 each coordinate substrate. Arginine 217 is an ATP binding site. Arginine 223 is a binding site for substrate.

Belongs to the herpesviridae thymidine kinase family. As to quaternary structure, homodimer.

It catalyses the reaction thymidine + ATP = dTMP + ADP + H(+). Functionally, catalyzes the transfer of the gamma-phospho group of ATP to thymidine to generate dTMP in the salvage pathway of pyrimidine synthesis. The dTMP serves as a substrate for DNA polymerase during viral DNA replication. Allows the virus to be reactivated and to grow in non-proliferative cells lacking a high concentration of phosphorylated nucleic acid precursors. This chain is Thymidine kinase, found in Human herpesvirus 2 (strain 333) (HHV-2).